The sequence spans 341 residues: Mitochondrial transcription factor 1 (341 aa).

Residues L23, E77, D101, and N137 each coordinate S-adenosyl-L-methionine.

Belongs to the class I-like SAM-binding methyltransferase superfamily. rRNA adenine N(6)-methyltransferase family.

It is found in the mitochondrion. In terms of biological role, mitochondrial transcription factor that confers selective promoter recognition on the core subunit of the yeast mitochondrial RNA polymerase. Interacts with DNA in a non-specific manner. This Saccharomyces paradoxus (Yeast) protein is Mitochondrial transcription factor 1 (MTF1).